The primary structure comprises 354 residues: 3-isopropylmalate dehydrogenase (354 aa).

Position 74 to 87 (74 to 87) interacts with NAD(+); it reads GPKWDDLPPEKRPE. Residues Arg95, Arg105, Arg134, and Asp219 each coordinate substrate. 3 residues coordinate Mg(2+): Asp219, Asp243, and Asp247. 275–287 serves as a coordination point for NAD(+); it reads GSAPDIAGKNIAN.

Belongs to the isocitrate and isopropylmalate dehydrogenases family. LeuB type 1 subfamily. As to quaternary structure, homodimer. Mg(2+) serves as cofactor. Requires Mn(2+) as cofactor.

The protein resides in the cytoplasm. The enzyme catalyses (2R,3S)-3-isopropylmalate + NAD(+) = 4-methyl-2-oxopentanoate + CO2 + NADH. Its pathway is amino-acid biosynthesis; L-leucine biosynthesis; L-leucine from 3-methyl-2-oxobutanoate: step 3/4. Functionally, catalyzes the oxidation of 3-carboxy-2-hydroxy-4-methylpentanoate (3-isopropylmalate) to 3-carboxy-4-methyl-2-oxopentanoate. The product decarboxylates to 4-methyl-2 oxopentanoate. This chain is 3-isopropylmalate dehydrogenase (leuB), found in Thermotoga maritima (strain ATCC 43589 / DSM 3109 / JCM 10099 / NBRC 100826 / MSB8).